A 424-amino-acid polypeptide reads, in one-letter code: Histidine--tRNA ligase (424 aa).

It belongs to the class-II aminoacyl-tRNA synthetase family. As to quaternary structure, homodimer.

The protein localises to the cytoplasm. The catalysed reaction is tRNA(His) + L-histidine + ATP = L-histidyl-tRNA(His) + AMP + diphosphate + H(+). This chain is Histidine--tRNA ligase, found in Salmonella paratyphi B (strain ATCC BAA-1250 / SPB7).